Reading from the N-terminus, the 272-residue chain is MTTRVIALDLDGTLLTPKKTLLPSSIEALARAREAGYQLIIVTGRHHVAIHPFYQALALDTPAICCNGTYLYDYHAKTVLEADPMPVIKALQLIEMLNEHHIHGLMYVDDAMVYEHPTGHVIRTSNWAQTLPPEQRPTFTQVASLAETAQQVNAVWKFALTHDDLPQLQHFGKHVEHELGLECEWSWHDQVDIARGGNSKGKRLTKWVEAQGWSMENVVAFGDNFNDISMLEAAGTGVAMGNADDAVKARANIVIGDNTTDSIAQFIYSHLI.

The Nucleophile role is filled by D9. D9 provides a ligand contact to Mg(2+). L10 provides a ligand contact to phosphate. D11 contacts Mg(2+). Phosphate is bound by residues 43–44 and K200; that span reads TG. D223 is a Mg(2+) binding site. N226 contributes to the phosphate binding site.

Belongs to the HAD-like hydrolase superfamily. CbbY/CbbZ/Gph/YieH family. Requires Mg(2+) as cofactor. Mn(2+) serves as cofactor. The cofactor is Co(2+). Zn(2+) is required as a cofactor.

It catalyses the reaction pyridoxal 5'-phosphate + H2O = pyridoxal + phosphate. Its function is as follows. Catalyzes the dephosphorylation of pyridoxal-phosphate (PLP). Can also hydrolyze erythrose-4-phosphate (Ery4P) and fructose-1,6-bis-phosphate (Fru1,6bisP). This chain is Pyridoxal phosphate phosphatase YbhA (ybhA), found in Escherichia coli (strain K12).